A 109-amino-acid polypeptide reads, in one-letter code: uncharacterized protein (109 aa).

Residues 29–49 (ITIIITLVIIFIIFTLIILYF) form a helical membrane-spanning segment.

Its subcellular location is the membrane. This is an uncharacterized protein from Sputnik virophage.